Here is a 547-residue protein sequence, read N- to C-terminus: Phosphatidylinositol/phosphatidylcholine transfer protein SFH7 (547 aa).

The 175-residue stretch at 130–304 (EIDQVLKHYP…FFGGLCTCAD (175 aa)) folds into the CRAL-TRIO domain. Residues 464–526 (SSEYVIMVKR…KKALDETMVN (63 aa)) are a coiled coil.

The protein belongs to the SFH family.

Its subcellular location is the golgi apparatus membrane. The protein resides in the cell membrane. Required for transport of secretory proteins from the Golgi complex. Catalyzes the transfer of phosphatidylinositol and phosphatidylcholine between membranes in vitro. The polypeptide is Phosphatidylinositol/phosphatidylcholine transfer protein SFH7 (SFH7) (Arabidopsis thaliana (Mouse-ear cress)).